The primary structure comprises 209 residues: Guanylate kinase (209 aa).

The Guanylate kinase-like domain occupies 5-184; the sequence is GLLIVFSGPS…AAERVKRVIE (180 aa). 12–19 provides a ligand contact to ATP; the sequence is GPSGVGKG.

It belongs to the guanylate kinase family.

It is found in the cytoplasm. The enzyme catalyses GMP + ATP = GDP + ADP. Essential for recycling GMP and indirectly, cGMP. In Streptococcus thermophilus (strain CNRZ 1066), this protein is Guanylate kinase.